We begin with the raw amino-acid sequence, 96 residues long: Myosuppressin (96 aa).

The first 24 residues, 1-24, serve as a signal peptide directing secretion; the sequence is MALGNGYYCAVVCVVLACASVVLC. The propeptide occupies 25 to 80; that stretch reads APAQLCAGAADDDPRAARFCQALNTFLELYAEAAGEQVPEYQALVRDYPQLLDTGM. Q83 bears the Pyrrolidone carboxylic acid; partial mark. Phenylalanine amide is present on F92. Residue R96 is a propeptide.

Belongs to the myosuppressin family. In terms of tissue distribution, expressed in corpora cardiaca (CC), corpora allata (CA), antennal lobe (AL) and gnathal ganglion (GNG) (at protein level). In its non-pyroglutamate form, expression in GNG detected in all animals, in AL, CC and in CA in most animals (at protein level). In its pyroglutamate form, expression in CC, CA and GNG detected in all animals, in AL in some animals (at protein level).

Its subcellular location is the secreted. Functionally, myoinhibiting neuropeptide. The chain is Myosuppressin from Agrotis ipsilon (Black cutworm moth).